The chain runs to 439 residues: Sequestosome-1 (439 aa).

N-acetylalanine is present on Ala2. The interval Ala2–Arg48 is interaction with LCK. In terms of domain architecture, PB1 spans Ser3–Lys100. The residue at position 24 (Ser24) is a Phosphoserine. The segment at Pro41 to Arg105 is interaction with PRKCZ and dimerization. The interaction with PAWR stretch occupies residues Arg48–Asp78. The tract at residues Val119–Ser221 is interaction with GABRR3. Residues His120–Gly170 form a ZZ-type zinc finger. Zn(2+)-binding residues include Cys125, Cys128, Cys139, and Cys142. The residue at position 145 (Tyr145) is a Phosphotyrosine. Positions 148, 151, 157, and 160 each coordinate Zn(2+). The tract at residues Asn167–Pro217 is LIM protein-binding. Phosphoserine is present on residues Ser173, Ser175, and Ser204. The interval Gly201–Val231 is disordered. The short motif at Pro225–Asn230 is the TRAF6-binding element. Phosphoserine occurs at positions 246 and 263. The disordered stretch occupies residues Gly259–Ala389. Polar residues predominate over residues Leu265–Val292. The residue at position 266 (Thr266) is a Phosphothreonine. Positions Thr266–Leu439 are interaction with NTRK1. Residues Ser269 and Ser281 each carry the phosphoserine modification. Residue Cys288 is the site of S-palmitoyl cysteine attachment. Phosphoserine is present on residues Ser305, Ser327, and Ser331. Residues Gln320–Ser341 are MAP1LC3B-binding. Residues Asp335 to Leu340 carry the LIR motif. Positions Asp336–Asp346 are enriched in basic and acidic residues. Residues Asp346–Glu351 form an interaction with KEAP1 region. Residues Ser348, Ser354, Ser360, Ser364, and Ser365 each carry the phosphoserine modification. Residues Gly350–Gly372 are compositionally biased toward polar residues. The UBA domain maps to Glu388 to Ser433. A Phosphoserine; by ULK1 and TBK1 modification is found at Ser402. Ser406 is subject to Phosphoserine. N6-acetyllysine; alternate is present on residues Lys419 and Lys434. Lys419 participates in a covalent cross-link: Glycyl lysine isopeptide (Lys-Gly) (interchain with G-Cter in ubiquitin); alternate. Lys434 participates in a covalent cross-link: Glycyl lysine isopeptide (Lys-Gly) (interchain with G-Cter in SUMO2); alternate.

As to quaternary structure, homooligomer or heterooligomer; may form homotypic arrays. Dimerization interferes with ubiquitin binding. Component of a ternary complex with PAWR and PRKCZ. Forms a complex with JUB/Ajuba, PRKCZ and TRAF6. Identified in a complex with TRAF6 and CYLD. Identified in a heterotrimeric complex with ubiquitin and ZFAND5, where ZFAND5 and SQSTM1 both interact with the same ubiquitin molecule. Interacts (via LIR motif) with MAP1LC3A and MAP1LC3B, as well as with other ATG8 family members, including GABARAP, GABARAPL1 and GABARAPL2; these interactions are necessary for the recruitment MAP1 LC3 family members to inclusion bodies containing polyubiquitinated protein aggregates and for their degradation by autophagy. Interacts directly with PRKCI and PRKCZ. Interacts with EBI3, LCK, RASA1, NR2F2, NTRK1, NTRK2, NTRK3, NBR1, MAP2K5 and MAPKAPK5. Upon TNF-alpha stimulation, interacts with RIPK1 probably bridging IKBKB to the TNF-R1 complex composed of TNF-R1/TNFRSF1A, TRADD and RIPK1. Interacts with the proteasome subunits PSMD4 and PSMC2. Interacts with TRAF6. Interacts with 'Lys-63'-linked polyubiquitinated MAPT/TAU. Interacts with FHOD3. Interacts with CYLD. Interacts with SESN1. Interacts with SESN2. Interacts with ULK1. Interacts with UBD. Interacts with WDR81; the interaction is direct and regulates the interaction of SQSTM1 with ubiquitinated proteins. Interacts with WDFY3; this interaction is required to recruit WDFY3 to cytoplasmic bodies and to PML bodies. Interacts with LRRC25. Interacts with STING1; leading to relocalization of STING1 to autophagosomes. Interacts (when phosphorylated at Ser-348) with KEAP1; the interaction is direct and inactivates the BCR(KEAP1) complex by sequestering KEAP1 in inclusion bodies, promoting its degradation. Interacts with MOAP1; promoting dissociation of SQSTM1 inclusion bodies that sequester KEAP1. Interacts with GBP1. Interacts with TAX1BP1. Interacts with (ubiquitinated) PEX5; specifically binds PEX5 ubiquitinated at 'Lys-209' in response to reactive oxygen species (ROS). Interacts (via PB1 domain) with TNS2; the interaction leads to sequestration of TNS2 in cytoplasmic aggregates with SQSTM1 and promotes TNS2 ubiquitination and proteasomal degradation. Interacts with IRS1; the interaction is disrupted by the presence of tensin TNS2. Interacts with TRIM5. Interacts with TRIM11 (when ubiquitinated); promoting AIM2 recruitment to autophagosomes and autophagy-dependent degradation of AIM2. Interacts with TRIM13. Interacts with TRIM16. Interacts with TRIM23. Interacts with TRIM50. Interacts with TRIM55. Interacts with ECSIT; this interaction inhibits TLR4 signaling via functional regulation of the TRAF6-ECSIT complex. Interacts with GABRR1, GABRR2 and GABRR3. Interacts with WDR83. Interacts with GRB2. Interacts with USP12; the interaction is independent of USP12 deubiquitinase activity and may be involved in regulation of autophagic flux. Interacts with ASB6. Phosphorylated. Phosphorylation at Ser-406 by ULK1 destabilizes the UBA dimer interface and increases binding affinity to ubiquitinated proteins. Phosphorylation at Ser-406 also primes for subsequent phosphorylation at Ser-402. Phosphorylation at Ser-402 by CK2 or ULK1 promotes binding to ubiquitinated proteins by increasing the affinity between the UBA domain and polyubiquitin chains. Phosphorylation at Ser-402 by ULK1 is stimulated by SESN2. Phosphorylated at Ser-402 by TBK1, leading to promote relocalization of 'Lys-63'-linked ubiquitinated STING1 to autophagosomes. Phosphorylation at Ser-348 by ULK1 promotes interaction with KEAP1 and inactivation of the BCR(KEAP1) complex, promoting NFE2L2/NRF2 nuclear accumulation and expression of phase II detoxifying enzymes. Phosphorylated in vitro by TTN. In terms of processing, ubiquitinated by UBE2J1 and RNF26 at Lys-434: ubiquitinated SQSTM1 attracts specific vesicle-associated adapters, forming a molecular bridge that restrains cognate vesicles in the perinuclear region and organizes the endosomal pathway for efficient cargo transport. Ubiquitination by UBE2D2 and UBE2D3 increases its ability to bind polyubiquitin chains by destabilizing the UBA dimer interface. Deubiquitination by USP15 releases target vesicles for fast transport into the cell periphery. Ubiquitinated by the BCR(KEAP1) complex at Lys-419, increasing SQSTM1 sequestering activity and promoting its degradation. Ubiquitinated via 'Lys-29' and 'Lys-33'-linked polyubiquitination leading to xenophagic targeting of bacteria and inhibition of their replication. Post-translationally, acetylated at Lys-419 and Lys-434 by KAT5/TIP60, promotes activity by destabilizing the UBA dimer interface and increases binding affinity to ubiquitinated proteins. Deacetylated by HDAC6. Palmitoylation at Cys-288 by ZDHHC19 is required for efficient autophagic degradation of SQSTM1-cargo complexes by promoting affinity for ATG8 proteins and recruitment of p62 bodies to autophagosomes. Dealmitoylated at Cys-288 by LYPLA1. As to expression, ubiquitously expressed. In brain, mainly expressed by neurons, especially pyramidal neurons in the cerebral cortex and hippocampus. Also expressed by Purkinje cells and neurons in the dentate nucleus of the cerebellum and neurons of the basal ganglia (at protein level).

It is found in the cytoplasmic vesicle. Its subcellular location is the autophagosome. The protein localises to the preautophagosomal structure. The protein resides in the cytoplasm. It localises to the cytosol. It is found in the nucleus. Its subcellular location is the PML body. The protein localises to the late endosome. The protein resides in the lysosome. It localises to the endoplasmic reticulum. It is found in the myofibril. Its subcellular location is the sarcomere. Functionally, molecular adapter required for selective macroautophagy (aggrephagy) by acting as a bridge between polyubiquitinated proteins and autophagosomes. Promotes the recruitment of ubiquitinated cargo proteins to autophagosomes via multiple domains that bridge proteins and organelles in different steps. SQSTM1 first mediates the assembly and removal of ubiquitinated proteins by undergoing liquid-liquid phase separation upon binding to ubiquitinated proteins via its UBA domain, leading to the formation of insoluble cytoplasmic inclusions, known as p62 bodies. SQSTM1 then interacts with ATG8 family proteins on autophagosomes via its LIR motif, leading to p62 body recruitment to autophagosomes, followed by autophagic clearance of ubiquitinated proteins. SQSTM1 is itself degraded along with its ubiquitinated cargos. Also required to recruit ubiquitinated proteins to PML bodies in the nucleus. Also involved in autophagy of peroxisomes (pexophagy) in response to reactive oxygen species (ROS) by acting as a bridge between ubiquitinated PEX5 receptor and autophagosomes. Acts as an activator of the NFE2L2/NRF2 pathway via interaction with KEAP1: interaction inactivates the BCR(KEAP1) complex by sequestering the complex in inclusion bodies, promoting nuclear accumulation of NFE2L2/NRF2 and subsequent expression of cytoprotective genes. Promotes relocalization of 'Lys-63'-linked ubiquitinated STING1 to autophagosomes. Involved in endosome organization by retaining vesicles in the perinuclear cloud: following ubiquitination by RNF26, attracts specific vesicle-associated adapters, forming a molecular bridge that restrains cognate vesicles in the perinuclear region and organizes the endosomal pathway for efficient cargo transport. Sequesters tensin TNS2 into cytoplasmic puncta, promoting TNS2 ubiquitination and proteasomal degradation. May regulate the activation of NFKB1 by TNF-alpha, nerve growth factor (NGF) and interleukin-1. May play a role in titin/TTN downstream signaling in muscle cells. Adapter that mediates the interaction between TRAF6 and CYLD. More potent than isoform 2 to stimulate PRKCZ-dependent phosphorylation of KCNAB2. This is Sequestosome-1 (Sqstm1) from Rattus norvegicus (Rat).